Reading from the N-terminus, the 292-residue chain is Bifunctional protein FolD (292 aa).

NADP(+) is bound by residues 169 to 171 (GRS) and Ser194.

It belongs to the tetrahydrofolate dehydrogenase/cyclohydrolase family. Homodimer.

The catalysed reaction is (6R)-5,10-methylene-5,6,7,8-tetrahydrofolate + NADP(+) = (6R)-5,10-methenyltetrahydrofolate + NADPH. It catalyses the reaction (6R)-5,10-methenyltetrahydrofolate + H2O = (6R)-10-formyltetrahydrofolate + H(+). Its pathway is one-carbon metabolism; tetrahydrofolate interconversion. Functionally, catalyzes the oxidation of 5,10-methylenetetrahydrofolate to 5,10-methenyltetrahydrofolate and then the hydrolysis of 5,10-methenyltetrahydrofolate to 10-formyltetrahydrofolate. The protein is Bifunctional protein FolD of Nostoc punctiforme (strain ATCC 29133 / PCC 73102).